Here is a 930-residue protein sequence, read N- to C-terminus: Zn(2)-C6 fungal-type transcription factor FTF1c (930 aa).

The zn(2)-C6 fungal-type DNA-binding region spans 137 to 164 (CIPCRRKKIRCSGEKPACEHCLRSYIPC).

Its subcellular location is the nucleus. In terms of biological role, zn(2)-C6 fungal-type transcription factor that has a role in the establishment of the fungus within the plant and/or the progress of the disease. Regulates the expression of virulence factors such as SIX1 and SIX6. This Fusarium oxysporum f. sp. lycopersici (strain 4287 / CBS 123668 / FGSC 9935 / NRRL 34936) (Fusarium vascular wilt of tomato) protein is Zn(2)-C6 fungal-type transcription factor FTF1c.